The primary structure comprises 32 residues: Photosystem II reaction center protein Z (32 aa).

Residues Phe9–Val31 form a helical membrane-spanning segment.

This sequence belongs to the PsbZ family. In terms of assembly, PSII is composed of 1 copy each of membrane proteins PsbA, PsbB, PsbC, PsbD, PsbE, PsbF, PsbH, PsbI, PsbJ, PsbK, PsbL, PsbM, PsbT, PsbY, PsbZ, Psb30/Ycf12, at least 3 peripheral proteins of the oxygen-evolving complex and a large number of cofactors. It forms dimeric complexes.

It is found in the plastid. Its subcellular location is the chloroplast thylakoid membrane. Its function is as follows. May control the interaction of photosystem II (PSII) cores with the light-harvesting antenna, regulates electron flow through the 2 photosystem reaction centers. PSII is a light-driven water plastoquinone oxidoreductase, using light energy to abstract electrons from H(2)O, generating a proton gradient subsequently used for ATP formation. The chain is Photosystem II reaction center protein Z from Euglena stellata.